The primary structure comprises 677 residues: Protein PALS1 (677 aa).

A required for the correct localization of PALS1 and PATJ at cell-cell contacts and the normal formation of tight junctions and adherens junctions region spans residues 1-347 (MTTSHMNGYV…AQIKSPPIKE (347 aa)). The tract at residues 39 to 81 (ELGARTLPVRRSAQLEKIRQQQEDRRRREEEGRSRQELDLNSS) is disordered. Basic and acidic residues predominate over residues 51-76 (AQLEKIRQQQEDRRRREEEGRSRQEL). L27 domains follow at residues 121–178 (ALLE…NRPS) and 180–236 (PYPL…MQLE). In terms of domain architecture, PDZ spans 258 to 338 (IVRIEKAKDI…VLSFVLIPSA (81 aa)). Residues 347–419 (ETVVHVKAHF…PGKSFQQQRE (73 aa)) enclose the SH3 domain. The 182-residue stretch at 481–662 (KRPIALIGPP…SYQELLRLIN (182 aa)) folds into the Guanylate kinase-like domain. Position 488-495 (488-495 (GPPNCGQN)) interacts with ATP. Positions 506–526 (PDRFAGPVPHTTRSRRDAEAN) are disordered.

The protein belongs to the MAGUK family. Expressed in the retina and in the neural tube.

The protein resides in the apical cell membrane. It is found in the cell junction. Its subcellular location is the tight junction. In terms of biological role, plays a role in tight junction biogenesis and in the establishment of cell polarity in epithelial cells. Also involved in adherens junction biogenesis. Required for polarized epithelial organization, cell-cell adhesion and remodeling of myocardial cells during heart tube elongation during embryogenesis. Functions in cellular patterning of the retina and development of the retinal pigmented epithelium. Also required for embryo body axis specification. In Danio rerio (Zebrafish), this protein is Protein PALS1 (pals1a).